The following is a 122-amino-acid chain: Large ribosomal subunit protein bL12 (122 aa).

This sequence belongs to the bacterial ribosomal protein bL12 family. As to quaternary structure, homodimer. Part of the ribosomal stalk of the 50S ribosomal subunit. Forms a multimeric L10(L12)X complex, where L10 forms an elongated spine to which 2 to 4 L12 dimers bind in a sequential fashion. Binds GTP-bound translation factors.

Its function is as follows. Forms part of the ribosomal stalk which helps the ribosome interact with GTP-bound translation factors. Is thus essential for accurate translation. The protein is Large ribosomal subunit protein bL12 of Streptococcus mutans serotype c (strain ATCC 700610 / UA159).